The primary structure comprises 522 residues: Probable poly(ADP-ribose) glycohydrolase 2 (522 aa).

This sequence belongs to the poly(ADP-ribose) glycohydrolase family.

It carries out the reaction [(1''-&gt;2')-ADP-alpha-D-ribose](n) + H2O = [(1''-&gt;2')-ADP-alpha-D-ribose](n-1) + ADP-D-ribose. In terms of biological role, poly(ADP-ribose) synthesized after DNA damage is only present transiently and is rapidly degraded by poly(ADP-ribose) glycohydrolase. In Arabidopsis thaliana (Mouse-ear cress), this protein is Probable poly(ADP-ribose) glycohydrolase 2 (PARG2).